A 186-amino-acid chain; its full sequence is Elongation factor P (186 aa).

The protein belongs to the elongation factor P family.

It is found in the cytoplasm. It functions in the pathway protein biosynthesis; polypeptide chain elongation. Its function is as follows. Involved in peptide bond synthesis. Stimulates efficient translation and peptide-bond synthesis on native or reconstituted 70S ribosomes in vitro. Probably functions indirectly by altering the affinity of the ribosome for aminoacyl-tRNA, thus increasing their reactivity as acceptors for peptidyl transferase. The sequence is that of Elongation factor P from Clostridium acetobutylicum (strain ATCC 824 / DSM 792 / JCM 1419 / IAM 19013 / LMG 5710 / NBRC 13948 / NRRL B-527 / VKM B-1787 / 2291 / W).